A 314-amino-acid polypeptide reads, in one-letter code: Acetyl-coenzyme A carboxylase carboxyl transferase subunit alpha (314 aa).

In terms of domain architecture, CoA carboxyltransferase C-terminal spans 32-289; that stretch reads EIDMLEASLE…KSAFVEQLDS (258 aa).

The protein belongs to the AccA family. In terms of assembly, acetyl-CoA carboxylase is a heterohexamer composed of biotin carboxyl carrier protein (AccB), biotin carboxylase (AccC) and two subunits each of ACCase subunit alpha (AccA) and ACCase subunit beta (AccD).

The protein localises to the cytoplasm. The catalysed reaction is N(6)-carboxybiotinyl-L-lysyl-[protein] + acetyl-CoA = N(6)-biotinyl-L-lysyl-[protein] + malonyl-CoA. It participates in lipid metabolism; malonyl-CoA biosynthesis; malonyl-CoA from acetyl-CoA: step 1/1. Component of the acetyl coenzyme A carboxylase (ACC) complex. First, biotin carboxylase catalyzes the carboxylation of biotin on its carrier protein (BCCP) and then the CO(2) group is transferred by the carboxyltransferase to acetyl-CoA to form malonyl-CoA. The protein is Acetyl-coenzyme A carboxylase carboxyl transferase subunit alpha of Staphylococcus aureus (strain bovine RF122 / ET3-1).